A 209-amino-acid chain; its full sequence is MLTHLRPALTMILALTVLTGLAYPLAVTAVARLAFPEQAAGSLIHRADGTVLGSALIGQTFTRPEYFWSRPSAAGDGYDAANSSGTNLGPSNTALVAAVQARVEALKAANPDAVGPVPVDLVTASASGLDPHISPAAALWQAPRVAAARGLETGRVVELIRQATEGRVFGFLGEPSVNVLKLNLALDAQAPTPRQPEPGHPEPGRPEVR.

Residues 11–31 (MILALTVLTGLAYPLAVTAVA) form a helical membrane-spanning segment. Residues 188-209 (AQAPTPRQPEPGHPEPGRPEVR) are disordered. A compositionally biased stretch (basic and acidic residues) spans 197 to 209 (EPGHPEPGRPEVR).

The protein belongs to the KdpC family. The system is composed of three essential subunits: KdpA, KdpB and KdpC.

It is found in the cell inner membrane. In terms of biological role, part of the high-affinity ATP-driven potassium transport (or Kdp) system, which catalyzes the hydrolysis of ATP coupled with the electrogenic transport of potassium into the cytoplasm. This subunit acts as a catalytic chaperone that increases the ATP-binding affinity of the ATP-hydrolyzing subunit KdpB by the formation of a transient KdpB/KdpC/ATP ternary complex. This Rhodospirillum centenum (strain ATCC 51521 / SW) protein is Potassium-transporting ATPase KdpC subunit.